The sequence spans 380 residues: Ubiquitin-like protein 7 (380 aa).

The Ubiquitin-like domain occupies 18 to 98 (TPKSILRLPE…VLRKSWPEPD (81 aa)). Residues 200–313 (APMPGTDSSS…SSGVQSGTPI (114 aa)) are disordered. Low complexity predominate over residues 206-221 (DSSSRSMPSSSYRDMP). Phosphoserine is present on S230. Composition is skewed to low complexity over residues 240 to 253 (TRSTPSSSTPSSRP) and 270 to 293 (SELATALALASTPESSSHTPTPGT). Polar residues predominate over residues 294–313 (QGHSSGTSPMSSGVQSGTPI). A UBA domain is found at 333-377 (SLQSQWQPQLQQLRDMGIQDDELSLRALQATGGDIQAALELIFAG).

Binds ubiquitin. Interacts with MAVS; this interaction enhances TRIM21-dependent 'Lys-27'-linked polyubiquitination of MAVS. Post-translationally, deubiquitinated by OTUD4 which stabilizes UBL7 expression. Ubiquitous. Highly expressed in heart, skeletal muscle, testis, thyroid and adrenal gland.

Interferon-stimulated protein that positively regulates RNA virus-triggered innate immune signaling. Mechanistically, promotes 'Lys-27'-linked polyubiquitination of MAVS through TRIM21 leading to enhanced the IFN signaling pathway. The polypeptide is Ubiquitin-like protein 7 (UBL7) (Homo sapiens (Human)).